We begin with the raw amino-acid sequence, 172 residues long: S-ribosylhomocysteine lyase (172 aa).

Fe cation-binding residues include His-54, His-58, and Cys-128.

Belongs to the LuxS family. Homodimer. Requires Fe cation as cofactor.

It catalyses the reaction S-(5-deoxy-D-ribos-5-yl)-L-homocysteine = (S)-4,5-dihydroxypentane-2,3-dione + L-homocysteine. Functionally, involved in the synthesis of autoinducer 2 (AI-2) which is secreted by bacteria and is used to communicate both the cell density and the metabolic potential of the environment. The regulation of gene expression in response to changes in cell density is called quorum sensing. Catalyzes the transformation of S-ribosylhomocysteine (RHC) to homocysteine (HC) and 4,5-dihydroxy-2,3-pentadione (DPD). This is S-ribosylhomocysteine lyase from Aliivibrio salmonicida (strain LFI1238) (Vibrio salmonicida (strain LFI1238)).